The primary structure comprises 493 residues: 6-aminohexanoate-cyclic-dimer hydrolase (493 aa).

Catalysis depends on charge relay system residues Lys-72 and Ser-150. The Acyl-ester intermediate role is filled by Ser-174.

The protein belongs to the amidase family. As to quaternary structure, homodimer.

It catalyses the reaction 1,8-diazacyclotetradecane-2,9-dione + H2O = N-(6-aminohexanoyl)-6-aminohexanoate. It functions in the pathway xenobiotic degradation; nylon-6 oligomer degradation. Catalyzes the hydrolysis of 6-aminohexanoic acid cyclic dimer (1,8-diazacyclotetradecane-2,9-dione) to form the linear dimer 6-aminohexanoyl-6-aminohexanoic acid. The chain is 6-aminohexanoate-cyclic-dimer hydrolase (nylA) from Pseudomonas sp. (strain NK87).